Consider the following 86-residue polypeptide: Toxin ICK-18 (86 aa).

The N-terminal stretch at 1-19 (MKTIFALVFCCAIAVVVLG) is a signal peptide. 4 disulfides stabilise this stretch: C35–C49, C42–C61, C48–C76, and C79–C86.

It belongs to the neurotoxin 21 family. Expressed by the venom gland.

The protein localises to the secreted. Functionally, probable neurotoxin with ion channel impairing activity. This Trittame loki (Brush-footed trapdoor spider) protein is Toxin ICK-18.